A 318-amino-acid chain; its full sequence is L-malyl-CoA/beta-methylmalyl-CoA lyase (318 aa).

Positions 19, 24, 30, and 76 each coordinate substrate. Mg(2+) is bound by residues Glu141 and Asp168. Residues 167–168 and 251–252 each bind substrate; these read AD and IH.

Belongs to the HpcH/HpaI aldolase family. Homohexamer. Dimer of trimers. Mg(2+) is required as a cofactor. It depends on Mn(2+) as a cofactor.

It carries out the reaction (S)-malyl-CoA = glyoxylate + acetyl-CoA. The enzyme catalyses (2R,3S)-beta-methylmalyl-CoA = propanoyl-CoA + glyoxylate. In terms of biological role, involved in the ethylmalonyl-CoA pathway for acetate assimilation. Catalyzes the reversible condensation of glyoxylate and acetyl-CoA to L-malyl-CoA and the reversible condensation of glyoxylate and propionyl-CoA to yield beta-methylmalyl-CoA. This chain is L-malyl-CoA/beta-methylmalyl-CoA lyase, found in Cereibacter sphaeroides (strain ATCC 17029 / ATH 2.4.9) (Rhodobacter sphaeroides).